Consider the following 426-residue polypeptide: 26S proteasome regulatory subunit 7 homolog A (426 aa).

Residue 209–216 participates in ATP binding; the sequence is GPPGTGKT. Residues Lys-400 and Lys-415 each participate in a glycyl lysine isopeptide (Lys-Gly) (interchain with G-Cter in ubiquitin) cross-link.

It belongs to the AAA ATPase family. Component of the 19S regulatory particle (RP/PA700) base subcomplex of the 26S proteasome. The 26S proteasome is composed of a core protease (CP), known as the 20S proteasome, capped at one or both ends by the 19S regulatory particle (RP/PA700). The RP/PA700 complex is composed of at least 17 different subunits in two subcomplexes, the base and the lid, which form the portions proximal and distal to the 20S proteolytic core, respectively.

It localises to the cytoplasm. It is found in the nucleus. Its function is as follows. The 26S proteasome is involved in the ATP-dependent degradation of ubiquitinated proteins. The regulatory (or ATPase) complex confers ATP dependency and substrate specificity to the 26S complex. The chain is 26S proteasome regulatory subunit 7 homolog A (RPT1A) from Arabidopsis thaliana (Mouse-ear cress).